The primary structure comprises 468 residues: Glutamate--tRNA ligase (468 aa).

Positions 10–20 (PSPTGDLHIGG) match the 'HIGH' region motif. Residues Cys99, Cys101, Cys126, and Asp128 each coordinate Zn(2+). The 'KMSKS' region signature appears at 236–240 (RLSKR). An ATP-binding site is contributed by Lys239.

It belongs to the class-I aminoacyl-tRNA synthetase family. Glutamate--tRNA ligase type 1 subfamily. In terms of assembly, monomer. It depends on Zn(2+) as a cofactor.

The protein resides in the cytoplasm. It catalyses the reaction tRNA(Glu) + L-glutamate + ATP = L-glutamyl-tRNA(Glu) + AMP + diphosphate. Its function is as follows. Catalyzes the attachment of glutamate to tRNA(Glu) in a two-step reaction: glutamate is first activated by ATP to form Glu-AMP and then transferred to the acceptor end of tRNA(Glu). In Syntrophobacter fumaroxidans (strain DSM 10017 / MPOB), this protein is Glutamate--tRNA ligase.